The chain runs to 347 residues: UDP-3-O-acylglucosamine N-acyltransferase (347 aa).

Histidine 240 acts as the Proton acceptor in catalysis.

The protein belongs to the transferase hexapeptide repeat family. LpxD subfamily. In terms of assembly, homotrimer.

The enzyme catalyses a UDP-3-O-[(3R)-3-hydroxyacyl]-alpha-D-glucosamine + a (3R)-hydroxyacyl-[ACP] = a UDP-2-N,3-O-bis[(3R)-3-hydroxyacyl]-alpha-D-glucosamine + holo-[ACP] + H(+). Its pathway is bacterial outer membrane biogenesis; LPS lipid A biosynthesis. In terms of biological role, catalyzes the N-acylation of UDP-3-O-acylglucosamine using 3-hydroxyacyl-ACP as the acyl donor. Is involved in the biosynthesis of lipid A, a phosphorylated glycolipid that anchors the lipopolysaccharide to the outer membrane of the cell. The chain is UDP-3-O-acylglucosamine N-acyltransferase from Hydrogenovibrio crunogenus (strain DSM 25203 / XCL-2) (Thiomicrospira crunogena).